We begin with the raw amino-acid sequence, 92 residues long: Envelope glycoprotein J (92 aa).

The N-terminal stretch at 1-22 (MDRYAVRTWGIVGILGCAAVGA) is a signal peptide. At 23 to 49 (APTGPASDTTNATARLPTHPPLIRSGG) the chain is on the extracellular side. The N-linked (GlcNAc...) asparagine; by host glycan is linked to Asn33. A helical transmembrane segment spans residues 50–70 (FAVPLIVGGLCLMILGMACLL). Over 71 to 92 (EVLRRLGRELARCCPHAGQFAP) the chain is Cytoplasmic.

This sequence belongs to the alphaherpesvirinae glycoprotein J family.

It is found in the host Golgi apparatus membrane. The protein localises to the host endoplasmic reticulum membrane. It localises to the host endosome membrane. Functionally, functions as an activator of viral protein expression and virus production. In turn, promotes cell-to-cell spread as well as syncytia formation. The chain is Envelope glycoprotein J (gJ) from Homo sapiens (Human).